A 522-amino-acid chain; its full sequence is Peptide methionine sulfoxide reductase MsrA/MsrB (522 aa).

A Thioredoxin domain is found at 17–174 (LALGACSPKI…ALALIRNPNA (158 aa)). C68 and C71 are joined by a disulfide. Positions 199–354 (RTIYLAGGCF…PNGYCHIDIR (156 aa)) are peptide methionine sulfoxide reductase A. C207 is an active-site residue. One can recognise a MsrB domain in the interval 383 to 506 (DAELKRTLTE…NGASLKFIPL (124 aa)). The cysteines at positions 440 and 495 are disulfide-linked. C495 functions as the Nucleophile in the catalytic mechanism.

In the N-terminal section; belongs to the thioredoxin family. It in the central section; belongs to the MsrA Met sulfoxide reductase family. This sequence in the C-terminal section; belongs to the MsrB Met sulfoxide reductase family.

The catalysed reaction is L-methionyl-[protein] + [thioredoxin]-disulfide + H2O = L-methionyl-(S)-S-oxide-[protein] + [thioredoxin]-dithiol. It catalyses the reaction [thioredoxin]-disulfide + L-methionine + H2O = L-methionine (S)-S-oxide + [thioredoxin]-dithiol. The enzyme catalyses L-methionyl-[protein] + [thioredoxin]-disulfide + H2O = L-methionyl-(R)-S-oxide-[protein] + [thioredoxin]-dithiol. Its function is as follows. Has an important function as a repair enzyme for proteins that have been inactivated by oxidation. Catalyzes the reversible oxidation-reduction of methionine sulfoxide in proteins to methionine. This chain is Peptide methionine sulfoxide reductase MsrA/MsrB (msrAB), found in Neisseria gonorrhoeae.